Reading from the N-terminus, the 745-residue chain is Immunoglobulin superfamily containing leucine-rich repeat protein 2 (745 aa).

Positions 1 to 18 are cleaved as a signal peptide; that stretch reads MFPLRALWLVWALLGVAG. In terms of domain architecture, LRRNT spans 19 to 51; it reads SCPEPCACVDKYAHQFADCAYKELREVPEGLPA. Over 19–589 the chain is Extracellular; it reads SCPEPCACVD…VFSTKKELPS (571 aa). An N-linked (GlcNAc...) asparagine glycan is attached at Asn52. 5 LRR repeats span residues 52–73, 76–97, 100–123, 124–145, and 148–169; these read NVTT…AFAD, QVTS…ALAV, QLKN…RNLS, ALQL…ALGA, and DLRS…TFDA. Asn121 is a glycosylation site (N-linked (GlcNAc...) asparagine). In terms of domain architecture, LRRCT spans 181–232; it reads NPFHCGCGLVWLQAWAASTRVSLPEPDSIACASPPALQGVPVYRLPALPCAP. Residues 233–371 form the Ig-like domain; it reads PSVHLSAEPP…GANSTSIRVA (139 aa). Cys260 and Cys355 are oxidised to a cystine. The tract at residues 287 to 326 is disordered; sequence VLSGEDDGVGAEEGEGEGDGDLLTQTQAQTPTPAPAWPAP. Over residues 290–306 the composition is skewed to acidic residues; sequence GEDDGVGAEEGEGEGDG. Asn337 and Asn364 each carry an N-linked (GlcNAc...) asparagine glycan. Residues 375–466 form a disordered region; that stretch reads TGPPKHAPGA…QRCGNGDPSR (92 aa). Residues 431–449 show a composition bias toward acidic residues; that stretch reads TETEPEEDTSEGEEAEDQI. 2 N-linked (GlcNAc...) asparagine glycosylation sites follow: Asn474 and Asn563. Residues 590–610 form a helical membrane-spanning segment; it reads LLVIVAVSVFLLVLATVPLLG. The Cytoplasmic segment spans residues 611 to 745; the sequence is AACCHLLAKH…INGNYRQTAG (135 aa). The segment at 656–722 is disordered; sequence KSYPAGGEAG…FEAGSEYSDR (67 aa). Residues 665–683 show a composition bias toward acidic residues; that stretch reads GGEEPEDVQGEGLDEDAEQ. Position 719 is a phosphotyrosine (Tyr719). A Phosphoserine modification is found at Ser720.

As to quaternary structure, homomultimer. Interacts with NTRK1/TrkA.

Its subcellular location is the cell membrane. Required for axon extension during neural development. This is Immunoglobulin superfamily containing leucine-rich repeat protein 2 (ISLR2) from Homo sapiens (Human).